Consider the following 65-residue polypeptide: UPF0291 protein BBR47_33060 (65 aa).

Belongs to the UPF0291 family.

Its subcellular location is the cytoplasm. This chain is UPF0291 protein BBR47_33060, found in Brevibacillus brevis (strain 47 / JCM 6285 / NBRC 100599).